Reading from the N-terminus, the 495-residue chain is Sialin (495 aa).

Over residues Met1–Asp18 the composition is skewed to basic and acidic residues. The tract at residues Met1–Pro24 is disordered. The Cytoplasmic portion of the chain corresponds to Met1–Asn41. Phosphoserine is present on Ser3. The short motif at Leu22–Leu23 is the Dileucine internalization motif element. Residues Leu42–Val62 form a helical membrane-spanning segment. The Lumenal segment spans residues Ala63–Gly109. N-linked (GlcNAc...) asparagine glycans are attached at residues Asn71, Asn77, and Asn95. Residues Trp110–Ala130 form a helical membrane-spanning segment. Residues Ser131 to Lys136 lie on the Cytoplasmic side of the membrane. A helical transmembrane segment spans residues Met137–Ala157. Position 158 (Asp158) is a topological domain, lumenal. The chain crosses the membrane as a helical span at residues Leu159 to Phe179. At Pro180–Ser200 the chain is on the cytoplasmic side. Residues Ile201–Cys221 form a helical membrane-spanning segment. The Lumenal segment spans residues Tyr222–Thr227. The helical transmembrane segment at Tyr228–Val248 threads the bilayer. The Cytoplasmic portion of the chain corresponds to Ser249 to Ser279. Residues Val280–Ser300 traverse the membrane as a helical segment. At Tyr301–Gly328 the chain is on the lumenal side. Residues Phe329 to Ala349 traverse the membrane as a helical segment. At Asp350 to Arg365 the chain is on the cytoplasmic side. A helical transmembrane segment spans residues Ile366–Gly386. Residues Cys387–Leu391 lie on the Lumenal side of the membrane. Residues Ala392–Ile412 form a helical membrane-spanning segment. Residues Asn413–Gly423 lie on the Cytoplasmic side of the membrane. The chain crosses the membrane as a helical span at residues Ile424–Ala444. The Lumenal segment spans residues Lys445 to Gln457. The helical transmembrane segment at Thr458 to Ala478 threads the bilayer. At Lys479–His495 the chain is on the cytoplasmic side.

It belongs to the major facilitator superfamily. Sodium/anion cotransporter family. In terms of tissue distribution, in the adult, detected in placenta, kidney and pancreas. Abundant in the endothelial cells of tumors from ovary, colon, breast and lung, but is not detected in endothelial cells from the corresponding normal tissues. Highly expressed in salivary glands and liver, with lower levels of expression in brain, spleen kidney, muscle and pancreas. Expressed in acinar cells of salivary glands (at protein level).

The protein resides in the basolateral cell membrane. Its subcellular location is the cytoplasmic vesicle. It is found in the secretory vesicle. It localises to the synaptic vesicle membrane. The protein localises to the lysosome membrane. The catalysed reaction is N-acetylneuraminate(in) + H(+)(in) = N-acetylneuraminate(out) + H(+)(out). The enzyme catalyses D-glucuronate(out) + H(+)(out) = D-glucuronate(in) + H(+)(in). It carries out the reaction 2 nitrate(out) + H(+)(out) = 2 nitrate(in) + H(+)(in). It catalyses the reaction L-aspartate(out) = L-aspartate(in). The catalysed reaction is L-glutamate(out) = L-glutamate(in). The enzyme catalyses N-acetyl-L-aspartyl-L-glutamate(out) = N-acetyl-L-aspartyl-L-glutamate(in). Functionally, multifunctional anion transporter that operates via two distinct transport mechanisms, namely proton-coupled anion cotransport and membrane potential-dependent anion transport. Electroneutral proton-coupled acidic monosaccharide symporter, with a sugar to proton stoichiometry of 1:1. Exports glucuronic acid and free sialic acid derived from sialoglycoconjugate degradation out of lysosomes, driven by outwardly directed lysosomal pH gradient. May regulate lysosome function and metabolism of sialylated conjugates that impact oligodendrocyte lineage differentiation and myelinogenesis in the central nervous system. Electrogenic proton-coupled nitrate symporter that transports nitrate ions across the basolateral membrane of salivary gland acinar cells, with nitrate to proton stoichiometry of 2:1. May contribute to nitrate clearance from serum by salivary glands, where it is further concentrated and secreted in the saliva. Uses membrane potential to drive the uptake of acidic amino acids and peptides into synaptic vesicles. Responsible for synaptic vesicular storage of L-aspartate and L-glutamate in pinealocytes as well as vesicular uptake of N-acetyl-L-aspartyl-L-glutamate neuropeptide, relevant to aspartegic-associated glutamatergic neurotransmission and activation of metabotropic receptors that inhibit subsequent transmitter release. In terms of biological role, receptor for CM101, a polysaccharide produced by group B Streptococcus with antipathoangiogenic properties. The chain is Sialin (SLC17A5) from Homo sapiens (Human).